We begin with the raw amino-acid sequence, 276 residues long: Radial spoke head protein 9 homolog (276 aa).

This sequence belongs to the flagellar radial spoke RSP9 family. Component of the axonemal radial spoke 1 (RS1) and 2 (RS2) complexes, at least composed of spoke head proteins RSPH1, RSPH3, RSPH9 and the cilia-specific component RSPH4A or sperm-specific component RSPH6A, spoke stalk proteins RSPH14, DNAJB13, DYDC1, ROPN1L and NME5, and the RS1 complex-specific anchor protein IQUB. Interacts with IQUB. Interacts with RSPH3B. Interacts with RSPH4A. Interacts with RSPH6A. Interacts with CFAP61. Interacts with LRRC23.

The protein resides in the cytoplasm. It localises to the cytoskeleton. It is found in the cilium axoneme. The protein localises to the flagellum axoneme. Its subcellular location is the cell projection. The protein resides in the kinocilium. Functions as part of axonemal radial spoke complexes that play an important part in the motility of sperm and cilia. Essential for both the radial spoke head assembly and the central pair microtubule stability in ependymal motile cilia. Required for motility of olfactory and neural cilia and for the structural integrity of ciliary axonemes in both 9+0 and 9+2 motile cilia. The polypeptide is Radial spoke head protein 9 homolog (RSPH9) (Homo sapiens (Human)).